The primary structure comprises 174 residues: Cytoglobin-1 (174 aa).

The Globin domain maps to 15-165 (SLTEEDVCVI…LYWQMNRVYA (151 aa)). 2 residues coordinate heme b: H78 and H110.

Belongs to the globin family. In terms of assembly, monomeric. In terms of tissue distribution, expressed in all tissues examined with highest levels in brain, eye, gut and heart.

The protein resides in the cytoplasm. It is found in the nucleus. The catalysed reaction is Fe(II)-heme b-[protein] + nitric oxide + O2 = Fe(III)-heme b-[protein] + nitrate. It catalyses the reaction Fe(III)-heme b-[protein] + nitric oxide + H2O = Fe(II)-heme b-[protein] + nitrite + 2 H(+). The enzyme catalyses 2 superoxide + 2 H(+) = H2O2 + O2. It carries out the reaction H2O2 + AH2 = A + 2 H2O. Its function is as follows. Probable multifunctional globin with a hexacoordinated heme iron required for the catalysis of various reactions depending on redox condition of the cell as well as oxygen availability. Has a nitric oxide dioxygenase (NOD) activity and is most probably involved in cell-mediated and oxygen-dependent nitric oxide consumption. Under normoxic conditions functions as a nitric oxide dioxygenase (NOD) but under hypoxic conditions the globin may switch its function to that of a nitrite (NO2) reductase (NiR), generating nitric oxide. Could also have peroxidase and superoxide dismutase activities, detoxifying reactive oxygen species and protecting cells against oxidative stress. Also binds dioxygen with low affinity and could function as an oxygen sensor but has probably no function as a respiratory oxygen carrier. The polypeptide is Cytoglobin-1 (cygb1) (Danio rerio (Zebrafish)).